Reading from the N-terminus, the 348-residue chain is Rhodopsin (348 aa).

At methionine 1 the chain carries N-acetylmethionine. The Extracellular segment spans residues 1–36; that stretch reads MNGTEGLNFYVPFSNKTGVVRSPFEYPQYYLAEPWQ. 2 N-linked (GlcNAc...) asparagine glycosylation sites follow: asparagine 2 and asparagine 15. Residues 37 to 61 traverse the membrane as a helical segment; the sequence is FSVLAAYMFLLIVLGFPINFLTLYV. Over 62–73 the chain is Cytoplasmic; the sequence is TVQHKKLRTPLN. The helical transmembrane segment at 74 to 99 threads the bilayer; it reads YILLNLAVANLFMVFGGFTTTLYTSL. Residues 100 to 111 lie on the Extracellular side of the membrane; it reads HAYFVFGPTGCN. A disulfide bond links cysteine 110 and cysteine 187. Residues 112-133 traverse the membrane as a helical segment; sequence LEGFFATLGGEIALWSLVVLAI. Residues 134-136 carry the 'Ionic lock' involved in activated form stabilization motif; sequence ERY. Over 134–152 the chain is Cytoplasmic; that stretch reads ERYVVVCKPMSNFRFGENH. The chain crosses the membrane as a helical span at residues 153-173; sequence AIMGLALTWIMAMACAAAPLV. The Extracellular segment spans residues 174 to 202; it reads GWSRYIPEGMQCSCGIDYYTSRQEVNNES. Glutamate 201 is a Zn(2+) binding site. Residues 203–227 traverse the membrane as a helical segment; it reads FVIYMFVVHFTIPLVIIFFCYGQLV. The Cytoplasmic portion of the chain corresponds to 228-252; it reads FTVKEAAAQQQESATTQKAEKEVTR. The helical transmembrane segment at 253–274 threads the bilayer; sequence MVIIMVVAFLICWVPYASVAFY. Topologically, residues 275–286 are extracellular; the sequence is IFTHQGSDFGPI. Zn(2+) is bound at residue glutamine 279. The helical transmembrane segment at 287–306 threads the bilayer; sequence FMTIPSFFAKSSSIYNPVIY. At lysine 296 the chain carries N6-(retinylidene)lysine. At 307–348 the chain is on the cytoplasmic side; the sequence is IMMNKQFRNCMLTTLCCGRNPLGDDEASTTASKTETSQVAPA. S-palmitoyl cysteine attachment occurs at residues cysteine 322 and cysteine 323. Serine 334 bears the Phosphoserine mark. A phosphothreonine mark is found at threonine 335 and threonine 336. The residue at position 338 (serine 338) is a Phosphoserine. 2 positions are modified to phosphothreonine: threonine 340 and threonine 342. Residue serine 343 is modified to Phosphoserine.

The protein belongs to the G-protein coupled receptor 1 family. Opsin subfamily. Homodimer. May form a complex composed of RHO, GRK1 and RCVRN in a Ca(2+)-dependent manner; RCVRN prevents the interaction between GRK1 and RHO. Interacts with GRK1. Interacts (phosphorylated form) with SAG. Interacts with GNAT1. Interacts with GNAT3. SAG and G-proteins compete for a common binding site. Interacts with PRCD; the interaction promotes PRCD stability. Forms a complex with ASAP1 and ARF4. Forms a complex with ASAP1, RAB11A, Rabin8/RAB3IP, ARF4 and RAB11FIP3; the complex regulates Golgi-to-cilia rhodopsin/RHO transport in photoreceptors. Contains one covalently linked retinal chromophore. Upon light absorption, the covalently bound 11-cis-retinal is converted to all-trans-retinal. After hydrolysis of the Schiff base and release of the covalently bound all-trans-retinal, active rhodopsin is regenerated by binding of a fresh molecule of 11-cis-retinal.

The protein resides in the membrane. The protein localises to the cell projection. It is found in the cilium. Its subcellular location is the photoreceptor outer segment. Functionally, photoreceptor required for image-forming vision at low light intensity. Light-induced isomerization of 11-cis to all-trans retinal triggers a conformational change that activates signaling via G-proteins. Signaling mediates the activation of phospholipase C. Subsequent receptor phosphorylation mediates displacement of the bound G-protein alpha subunit by arrestin and terminates signaling. The polypeptide is Rhodopsin (RHO) (Tursiops truncatus (Atlantic bottle-nosed dolphin)).